The chain runs to 198 residues: Ribonuclease HII (198 aa).

Residues 10 to 198 (QLVAGVDEVG…PVKRALGLAS (189 aa)) form the RNase H type-2 domain. Residues D16, E17, and D108 each coordinate a divalent metal cation.

It belongs to the RNase HII family. Mn(2+) serves as cofactor. Mg(2+) is required as a cofactor.

The protein resides in the cytoplasm. It catalyses the reaction Endonucleolytic cleavage to 5'-phosphomonoester.. Its function is as follows. Endonuclease that specifically degrades the RNA of RNA-DNA hybrids. This is Ribonuclease HII from Shigella boydii serotype 18 (strain CDC 3083-94 / BS512).